Consider the following 245-residue polypeptide: uncharacterized protein (245 aa).

This is an uncharacterized protein from Mycobacterium tuberculosis (strain CDC 1551 / Oshkosh).